The following is a 475-amino-acid chain: Ornithine aminotransferase, mitochondrial (475 aa).

The N-terminal 16 residues, 1–16 (MAATTRRLLYYVSKRF), are a transit peptide targeting the mitochondrion. The tract at residues 23-43 (RSYGGLPQSNSKSPPSSSQRL) is disordered. A compositionally biased stretch (low complexity) spans 29-41 (PQSNSKSPPSSSQ). Residues 142–143 (GA) and Phe-177 contribute to the pyridoxal 5'-phosphate site. Arg-180 provides a ligand contact to L-ornithine. 265–268 (DEVQ) is a binding site for pyridoxal 5'-phosphate. Position 294 is an N6-(pyridoxal phosphate)lysine (Lys-294). Ser-323 is a binding site for L-ornithine. Thr-324 serves as a coordination point for pyridoxal 5'-phosphate.

The protein belongs to the class-III pyridoxal-phosphate-dependent aminotransferase family. Homotetramer. Pyridoxal 5'-phosphate is required as a cofactor.

The protein resides in the mitochondrion matrix. The enzyme catalyses a 2-oxocarboxylate + L-ornithine = L-glutamate 5-semialdehyde + an L-alpha-amino acid. The protein operates within amino-acid biosynthesis; L-proline biosynthesis; L-glutamate 5-semialdehyde from L-ornithine: step 1/1. Mediates degradation of arginine for nitrogen recycling. Plays a role in non-host disease resistance by regulating pyrroline-5-carboxylate metabolism-induced hypersensitive response. The polypeptide is Ornithine aminotransferase, mitochondrial (Arabidopsis thaliana (Mouse-ear cress)).